Consider the following 65-residue polypeptide: Chymotrypsin/elastase isoinhibitors 2 to 5 (65 aa).

Cystine bridges form between C4-C37, C13-C32, C16-C28, C20-C59, and C39-C53. A TIL domain is found at 4–59; sequence CGKNEVWTECTGCELKCGQDEKTPCALMCRPPSCECTPGRGMRRTHDGKCVPVSEC.

It belongs to the serine protease inhibitor-like (TIL domain-containing) family.

Its subcellular location is the secreted. In terms of biological role, defends the organism against the host's proteinases. The protein is Chymotrypsin/elastase isoinhibitors 2 to 5 of Ascaris suum (Pig roundworm).